The primary structure comprises 429 residues: 3-phosphoshikimate 1-carboxyvinyltransferase (429 aa).

Residues K20, S21, and R25 each coordinate 3-phosphoshikimate. Position 20 (K20) interacts with phosphoenolpyruvate. The phosphoenolpyruvate site is built by G89 and R118. The 3-phosphoshikimate site is built by S164, S165, Q166, S192, D311, and K338. Residue Q166 coordinates phosphoenolpyruvate. The active-site Proton acceptor is D311. Phosphoenolpyruvate is bound by residues R342 and R384.

This sequence belongs to the EPSP synthase family. As to quaternary structure, monomer.

It localises to the cytoplasm. The enzyme catalyses 3-phosphoshikimate + phosphoenolpyruvate = 5-O-(1-carboxyvinyl)-3-phosphoshikimate + phosphate. The protein operates within metabolic intermediate biosynthesis; chorismate biosynthesis. Its function is as follows. Catalyzes the transfer of the enolpyruvyl moiety of phosphoenolpyruvate (PEP) to the 5-hydroxyl of shikimate-3-phosphate (S3P) to produce enolpyruvyl shikimate-3-phosphate and inorganic phosphate. This chain is 3-phosphoshikimate 1-carboxyvinyltransferase, found in Methanococcus maripaludis (strain DSM 14266 / JCM 13030 / NBRC 101832 / S2 / LL).